A 249-amino-acid chain; its full sequence is Cysteine desulfuration protein SufE (249 aa).

C154 functions as the Cysteine persulfide intermediate in the catalytic mechanism.

This sequence belongs to the SufE family. As to quaternary structure, monomer. Interacts with SufS; interaction enhances cysteine desulfurase activity of SufS. Proteolytically cleaved.

The protein localises to the plastid. The protein resides in the apicoplast. The protein operates within cofactor biosynthesis; iron-sulfur cluster biosynthesis. In terms of biological role, participates in sulfur mobilization (SUF) pathway for iron-sulfur (Fe-S) cluster biogenesis. Enhances cysteine desulfurase activity of SufS. Probably functions as a sulfur acceptor for SufS. The sequence is that of Cysteine desulfuration protein SufE from Plasmodium falciparum (isolate 3D7).